A 526-amino-acid polypeptide reads, in one-letter code: Peptide chain release factor 3 (526 aa).

Positions 9–277 (DKRRTFAIIS…GIVEWAPKPL (269 aa)) constitute a tr-type G domain. GTP-binding positions include 18 to 25 (SHPDAGKT), 86 to 90 (DTPGH), and 140 to 143 (NKLD).

It belongs to the TRAFAC class translation factor GTPase superfamily. Classic translation factor GTPase family. PrfC subfamily.

It localises to the cytoplasm. Functionally, increases the formation of ribosomal termination complexes and stimulates activities of RF-1 and RF-2. It binds guanine nucleotides and has strong preference for UGA stop codons. It may interact directly with the ribosome. The stimulation of RF-1 and RF-2 is significantly reduced by GTP and GDP, but not by GMP. The chain is Peptide chain release factor 3 from Shewanella putrefaciens (strain CN-32 / ATCC BAA-453).